We begin with the raw amino-acid sequence, 178 residues long: MSKHKGPTGAMVDPESLPYRPCVGLMVLNKAGLVWAGRRIVIPGDEMDGATQLWQMPQGGIDKGEDPAQAALRELYEETGMTSVSLLEEASDWINYDLPPHLVGLALKGKYRGQTQKWFAYRFEGDESEIAINPPPGGHTAEFDCWEWKPMADLPNLIVPFKRKVYEQVVATFRHLAA.

The region spanning 18 to 171 is the Nudix hydrolase domain; it reads PYRPCVGLMV…KRKVYEQVVA (154 aa). Positions 59-80 match the Nudix box motif; that stretch reads GGIDKGEDPAQAALRELYEETG.

It belongs to the Nudix hydrolase family. RppH subfamily. A divalent metal cation serves as cofactor.

Accelerates the degradation of transcripts by removing pyrophosphate from the 5'-end of triphosphorylated RNA, leading to a more labile monophosphorylated state that can stimulate subsequent ribonuclease cleavage. This chain is RNA pyrophosphohydrolase, found in Brucella canis (strain ATCC 23365 / NCTC 10854 / RM-666).